The primary structure comprises 664 residues: DNA mismatch repair protein MutL (664 aa).

The tract at residues 382-447 is disordered; sequence RKAGQEQQLQ…YGEPAPSKQQ (66 aa). The segment covering 427–436 has biased composition (polar residues); it reads RHTTSSNQSE.

This sequence belongs to the DNA mismatch repair MutL/HexB family.

Its function is as follows. This protein is involved in the repair of mismatches in DNA. It is required for dam-dependent methyl-directed DNA mismatch repair. May act as a 'molecular matchmaker', a protein that promotes the formation of a stable complex between two or more DNA-binding proteins in an ATP-dependent manner without itself being part of a final effector complex. The protein is DNA mismatch repair protein MutL of Vibrio vulnificus (strain CMCP6).